We begin with the raw amino-acid sequence, 537 residues long: Eukaryotic translation initiation factor 3 subunit L (537 aa).

Residues 1-19 (MSRRVEFDMSHEDHTDRRR) show a composition bias toward basic and acidic residues. The disordered stretch occupies residues 1–28 (MSRRVEFDMSHEDHTDRRRTNTFSSEED). A PCI domain is found at 297–485 (EATKMFVNCL…GPSTVDDDEP (189 aa)).

Belongs to the eIF-3 subunit L family. Component of the eukaryotic translation initiation factor 3 (eIF-3) complex.

The protein localises to the cytoplasm. Its function is as follows. Component of the eukaryotic translation initiation factor 3 (eIF-3) complex, which is involved in protein synthesis of a specialized repertoire of mRNAs and, together with other initiation factors, stimulates binding of mRNA and methionyl-tRNAi to the 40S ribosome. The eIF-3 complex specifically targets and initiates translation of a subset of mRNAs involved in cell proliferation. The protein is Eukaryotic translation initiation factor 3 subunit L of Caenorhabditis briggsae.